Reading from the N-terminus, the 284-residue chain is D-tagatose-1,6-bisphosphate aldolase subunit GatY (284 aa).

Residue aspartate 82 is the Proton donor of the active site. Zn(2+)-binding residues include histidine 83 and histidine 180. Glycine 181 serves as a coordination point for dihydroxyacetone phosphate. Histidine 208 contributes to the Zn(2+) binding site. Residues 209–211 (GAS) and 230–233 (NVAT) contribute to the dihydroxyacetone phosphate site.

The protein belongs to the class II fructose-bisphosphate aldolase family. TagBP aldolase GatY subfamily. As to quaternary structure, forms a complex with GatZ. It depends on Zn(2+) as a cofactor.

The enzyme catalyses D-tagatofuranose 1,6-bisphosphate = D-glyceraldehyde 3-phosphate + dihydroxyacetone phosphate. Its pathway is carbohydrate metabolism; D-tagatose 6-phosphate degradation; D-glyceraldehyde 3-phosphate and glycerone phosphate from D-tagatose 6-phosphate: step 2/2. In terms of biological role, catalytic subunit of the tagatose-1,6-bisphosphate aldolase GatYZ, which catalyzes the reversible aldol condensation of dihydroxyacetone phosphate (DHAP or glycerone-phosphate) with glyceraldehyde 3-phosphate (G3P) to produce tagatose 1,6-bisphosphate (TBP). Requires GatZ subunit for full activity and stability. Is involved in the catabolism of galactitol. The sequence is that of D-tagatose-1,6-bisphosphate aldolase subunit GatY from Shigella flexneri serotype 5b (strain 8401).